We begin with the raw amino-acid sequence, 317 residues long: Acetyl-coenzyme A carboxylase carboxyl transferase subunit alpha (317 aa).

A CoA carboxyltransferase C-terminal domain is found at 39-293; it reads RLESRVNDAM…GDVIAKALAD (255 aa).

The protein belongs to the AccA family. Acetyl-CoA carboxylase is a heterohexamer composed of biotin carboxyl carrier protein (AccB), biotin carboxylase (AccC) and two subunits each of ACCase subunit alpha (AccA) and ACCase subunit beta (AccD).

Its subcellular location is the cytoplasm. The catalysed reaction is N(6)-carboxybiotinyl-L-lysyl-[protein] + acetyl-CoA = N(6)-biotinyl-L-lysyl-[protein] + malonyl-CoA. The protein operates within lipid metabolism; malonyl-CoA biosynthesis; malonyl-CoA from acetyl-CoA: step 1/1. Component of the acetyl coenzyme A carboxylase (ACC) complex. First, biotin carboxylase catalyzes the carboxylation of biotin on its carrier protein (BCCP) and then the CO(2) group is transferred by the carboxyltransferase to acetyl-CoA to form malonyl-CoA. The chain is Acetyl-coenzyme A carboxylase carboxyl transferase subunit alpha from Agrobacterium fabrum (strain C58 / ATCC 33970) (Agrobacterium tumefaciens (strain C58)).